Reading from the N-terminus, the 180-residue chain is ATP-dependent protease subunit HslV (180 aa).

Thr-7 is an active-site residue. Na(+)-binding residues include Gly-165, Cys-168, and Thr-171.

The protein belongs to the peptidase T1B family. HslV subfamily. A double ring-shaped homohexamer of HslV is capped on each side by a ring-shaped HslU homohexamer. The assembly of the HslU/HslV complex is dependent on binding of ATP.

The protein resides in the cytoplasm. It catalyses the reaction ATP-dependent cleavage of peptide bonds with broad specificity.. Allosterically activated by HslU binding. Protease subunit of a proteasome-like degradation complex believed to be a general protein degrading machinery. The sequence is that of ATP-dependent protease subunit HslV from Bacillus cereus (strain ATCC 10987 / NRS 248).